A 750-amino-acid polypeptide reads, in one-letter code: Photosystem I P700 chlorophyll a apoprotein A1 (750 aa).

The next 8 helical transmembrane spans lie at V70 to A93, L156 to H179, L195 to L219, I291 to Y309, W346 to Y369, L385 to V411, A433 to H455, and F531 to L549. Residues C573 and C582 each contribute to the [4Fe-4S] cluster site. 2 consecutive transmembrane segments (helical) span residues H589–W610 and L664–F686. A chlorophyll a'-binding site is contributed by H675. Chlorophyll a contacts are provided by M683 and Y691. W692 contacts phylloquinone. Residues A724–A744 traverse the membrane as a helical segment.

Belongs to the PsaA/PsaB family. In terms of assembly, the PsaA/B heterodimer binds the P700 chlorophyll special pair and subsequent electron acceptors. PSI consists of a core antenna complex that captures photons, and an electron transfer chain that converts photonic excitation into a charge separation. The eukaryotic PSI reaction center is composed of at least 11 subunits. It depends on P700 is a chlorophyll a/chlorophyll a' dimer, A0 is one or more chlorophyll a, A1 is one or both phylloquinones and FX is a shared 4Fe-4S iron-sulfur center. as a cofactor.

Its subcellular location is the plastid. The protein resides in the chloroplast thylakoid membrane. The catalysed reaction is reduced [plastocyanin] + hnu + oxidized [2Fe-2S]-[ferredoxin] = oxidized [plastocyanin] + reduced [2Fe-2S]-[ferredoxin]. Functionally, psaA and PsaB bind P700, the primary electron donor of photosystem I (PSI), as well as the electron acceptors A0, A1 and FX. PSI is a plastocyanin-ferredoxin oxidoreductase, converting photonic excitation into a charge separation, which transfers an electron from the donor P700 chlorophyll pair to the spectroscopically characterized acceptors A0, A1, FX, FA and FB in turn. Oxidized P700 is reduced on the lumenal side of the thylakoid membrane by plastocyanin. The protein is Photosystem I P700 chlorophyll a apoprotein A1 of Phalaenopsis aphrodite subsp. formosana (Moth orchid).